The following is a 185-amino-acid chain: Riboflavin kinase (185 aa).

Residues Thr-41 and Asn-43 each coordinate Mg(2+). Glu-122 functions as the Nucleophile in the catalytic mechanism.

The protein belongs to the flavokinase family. The cofactor is Zn(2+). It depends on Mg(2+) as a cofactor.

It catalyses the reaction riboflavin + ATP = FMN + ADP + H(+). Its pathway is cofactor biosynthesis; FMN biosynthesis; FMN from riboflavin (ATP route): step 1/1. Functionally, catalyzes the phosphorylation of riboflavin (vitamin B2) to form flavin mononucleotide (FMN) coenzyme. The protein is Riboflavin kinase (FMN1) of Kluyveromyces lactis (strain ATCC 8585 / CBS 2359 / DSM 70799 / NBRC 1267 / NRRL Y-1140 / WM37) (Yeast).